The chain runs to 324 residues: D-alanine--D-alanine ligase (324 aa).

An ATP-grasp domain is found at 121 to 321 (NQYLKAFGVR…IKDVMTDIIE (201 aa)). 149–204 (VEKIGLPCFIKPNLGGSSFGVTKVKTREQIQPAIAKAFSEAEEVMIEAFMGGTELT) lines the ATP pocket. Mg(2+) is bound by residues Asp-275, Glu-288, and Asn-290.

It belongs to the D-alanine--D-alanine ligase family. The cofactor is Mg(2+). It depends on Mn(2+) as a cofactor.

It is found in the cytoplasm. The enzyme catalyses 2 D-alanine + ATP = D-alanyl-D-alanine + ADP + phosphate + H(+). The protein operates within cell wall biogenesis; peptidoglycan biosynthesis. Functionally, cell wall formation. The chain is D-alanine--D-alanine ligase from Bacteroides fragilis (strain ATCC 25285 / DSM 2151 / CCUG 4856 / JCM 11019 / LMG 10263 / NCTC 9343 / Onslow / VPI 2553 / EN-2).